Here is a 30-residue protein sequence, read N- to C-terminus: Trypsin inhibitor 2 (30 aa).

Cystine bridges form between cysteine 2–cysteine 19, cysteine 9–cysteine 21, and cysteine 15–cysteine 27.

It belongs to the protease inhibitor I7 (squash-type serine protease inhibitor) family.

It is found in the secreted. Its function is as follows. Inhibits trypsin. This chain is Trypsin inhibitor 2, found in Ecballium elaterium (Squirting cucumber).